The chain runs to 397 residues: Class V chitinase CHIT5 (397 aa).

The signal sequence occupies residues 1-18 (MIIKLLVALIHYLHETMA). Positions 54–397 (GVRAAYWPAW…SKQASNAWGY (344 aa)) constitute a GH18 domain. N-linked (GlcNAc...) asparagine glycans are attached at residues Asn128 and Asn147. Glu166 acts as the Proton donor in catalysis. N-linked (GlcNAc...) asparagine glycans are attached at residues Asn193, Asn209, Asn247, and Asn261.

This sequence belongs to the glycosyl hydrolase 18 family. Chitinase class V subfamily.

The catalysed reaction is Random endo-hydrolysis of N-acetyl-beta-D-glucosaminide (1-&gt;4)-beta-linkages in chitin and chitodextrins.. Its pathway is glycan degradation; chitin degradation. Functionally, possesses chitinase activity in vitro toward glycol chitin, carboxymethyl-chitin, colloidal chitin, and the chitin oligosaccharides (N-acetylglucosamine) (GlcNAc)6 and (GlcNAc)5. Hydrolyzes (GlcNAc)6 into (GlcNAc)4 and (GlcNAc)2, or two (GlcNAc)3 molecules. Has the capacity to inhibit hyphal growth of the fungus Trichoderma viride in an agar-plate bioassay. Involved in symbiotic signaling. Required for root hair infection threads (ITs) elongation and nodule development. Possesses Nod factor (NF) hydrolase activity. NFs are lipo-chitooligosaccharide signaling molecules produced by nitrogen-fixing rhizobia to initiate nodulation (symbiosis) on the roots of legumes. Modulates NF levels and signaling to complete transition of infected nodules to functional nitrogen-fixing organs. The protein is Class V chitinase CHIT5 of Lotus japonicus (Lotus corniculatus var. japonicus).